We begin with the raw amino-acid sequence, 231 residues long: Small ribosomal subunit protein uS3c (231 aa).

One can recognise a KH type-2 domain in the interval 39–123; the sequence is LRNFIKKKYI…HLRLSVKPLR (85 aa).

The protein belongs to the universal ribosomal protein uS3 family. As to quaternary structure, part of the 30S ribosomal subunit.

The protein resides in the plastid. Its subcellular location is the chloroplast. The sequence is that of Small ribosomal subunit protein uS3c (rps3) from Chlorella vulgaris (Green alga).